A 431-amino-acid polypeptide reads, in one-letter code: Trigger factor (431 aa).

One can recognise a PPIase FKBP-type domain in the interval 160-245; sequence DDRVTIDFVG…VKKVEVMVLP (86 aa).

This sequence belongs to the FKBP-type PPIase family. Tig subfamily.

The protein resides in the cytoplasm. It carries out the reaction [protein]-peptidylproline (omega=180) = [protein]-peptidylproline (omega=0). In terms of biological role, involved in protein export. Acts as a chaperone by maintaining the newly synthesized protein in an open conformation. Functions as a peptidyl-prolyl cis-trans isomerase. In Mannheimia succiniciproducens (strain KCTC 0769BP / MBEL55E), this protein is Trigger factor.